Here is a 304-residue protein sequence, read N- to C-terminus: Ornithine carbamoyltransferase (304 aa).

Carbamoyl phosphate is bound by residues 51–54 (STRT), Gln78, Arg102, and 129–132 (HPVQ). L-ornithine is bound by residues Asn157, Asp221, and 225–226 (SM). Carbamoyl phosphate is bound by residues 261-262 (CL) and Arg289.

Belongs to the aspartate/ornithine carbamoyltransferase superfamily. OTCase family.

The protein resides in the cytoplasm. The enzyme catalyses carbamoyl phosphate + L-ornithine = L-citrulline + phosphate + H(+). The protein operates within amino-acid degradation; L-arginine degradation via ADI pathway; carbamoyl phosphate from L-arginine: step 2/2. In terms of biological role, reversibly catalyzes the transfer of the carbamoyl group from carbamoyl phosphate (CP) to the N(epsilon) atom of ornithine (ORN) to produce L-citrulline. This chain is Ornithine carbamoyltransferase, found in Campylobacter curvus (strain 525.92).